The following is a 102-amino-acid chain: Putative UPF0320 protein YMR326C (102 aa).

The protein belongs to the UPF0320 family.

In Saccharomyces cerevisiae (strain ATCC 204508 / S288c) (Baker's yeast), this protein is Putative UPF0320 protein YMR326C.